Reading from the N-terminus, the 209-residue chain is MSTLVIVRHGQSEGNARGEFTGTSDVPLTQEGWSESRRAGSLLANLGISFDIAFSSALLRTVDTCRAILNETNGDLLEPIRRTELNERDYGQLTGINKNVARERWGQDVVQVWRRSYSTPPPGGESIRDISARVLPFLISEVFPPLLRGKSVLVVAHGNTIRSLKQGIERLTIQDTLAIESPTAAPTVYRIASDLSIIEKTNVLVGTVC.

Residues 8-15 (RHGQSEGN), 21-22 (TG), R60, 87-90 (ERDY), K98, 114-115 (RR), and 158-159 (GN) contribute to the substrate site. H9 functions as the Tele-phosphohistidine intermediate in the catalytic mechanism. The active-site Proton donor/acceptor is E87.

Belongs to the phosphoglycerate mutase family. BPG-dependent PGAM subfamily. As to quaternary structure, homodimer.

It carries out the reaction (2R)-2-phosphoglycerate = (2R)-3-phosphoglycerate. It functions in the pathway carbohydrate degradation; glycolysis; pyruvate from D-glyceraldehyde 3-phosphate: step 3/5. In terms of biological role, catalyzes the interconversion of 2-phosphoglycerate and 3-phosphoglycerate. In Rhizobium etli (strain ATCC 51251 / DSM 11541 / JCM 21823 / NBRC 15573 / CFN 42), this protein is 2,3-bisphosphoglycerate-dependent phosphoglycerate mutase.